Here is a 569-residue protein sequence, read N- to C-terminus: TBCC domain-containing protein 1 (569 aa).

Positions 304-435 constitute a C-CAP/cofactor C-like domain; sequence PRSHRIVVMS…LEDHMARTGL (132 aa).

Belongs to the TBCC family.

The protein localises to the cytoplasm. The protein resides in the cytoskeleton. It is found in the microtubule organizing center. It localises to the centrosome. Its subcellular location is the spindle pole. In terms of biological role, plays a role in the regulation of centrosome and Golgi apparatus positioning, with consequences on cell shape and cell migration. This is TBCC domain-containing protein 1 (Tbccd1) from Rattus norvegicus (Rat).